The primary structure comprises 387 residues: Succinate--CoA ligase [ADP-forming] subunit beta (387 aa).

Positions 9 to 245 (KDLLESYGLK…KSQENAKELK (237 aa)) constitute an ATP-grasp domain. Residues lysine 46, 53–55 (GRG), glutamate 100, tyrosine 103, and glutamate 108 each bind ATP. Mg(2+)-binding residues include asparagine 200 and aspartate 214. Substrate contacts are provided by residues asparagine 265 and 322 to 324 (GIV).

Belongs to the succinate/malate CoA ligase beta subunit family. In terms of assembly, heterotetramer of two alpha and two beta subunits. Mg(2+) serves as cofactor.

The catalysed reaction is succinate + ATP + CoA = succinyl-CoA + ADP + phosphate. It catalyses the reaction GTP + succinate + CoA = succinyl-CoA + GDP + phosphate. It functions in the pathway carbohydrate metabolism; tricarboxylic acid cycle; succinate from succinyl-CoA (ligase route): step 1/1. Functionally, succinyl-CoA synthetase functions in the citric acid cycle (TCA), coupling the hydrolysis of succinyl-CoA to the synthesis of either ATP or GTP and thus represents the only step of substrate-level phosphorylation in the TCA. The beta subunit provides nucleotide specificity of the enzyme and binds the substrate succinate, while the binding sites for coenzyme A and phosphate are found in the alpha subunit. The polypeptide is Succinate--CoA ligase [ADP-forming] subunit beta (Francisella tularensis subsp. holarctica (strain OSU18)).